Reading from the N-terminus, the 130-residue chain is Profilin-1 (130 aa).

Belongs to the profilin family. Interacts with actin. Interacts with RHO1 (GTP-bound form).

Its subcellular location is the cytoplasm. It is found in the cytoskeleton. It localises to the cell projection. The protein localises to the phagocytic cup. The protein resides in the cytoplasmic vesicle. Its subcellular location is the phagosome. In terms of biological role, binds to actin and affects the structure of the cytoskeleton. At high concentrations, profilin prevents the polymerization of actin, whereas it enhances it at low concentrations. By binding to PIP2, it inhibits the formation of IP3 and DG. This chain is Profilin-1, found in Entamoeba histolytica (strain ATCC 30459 / HM-1:IMSS / ABRM).